The following is a 171-amino-acid chain: Phosphopantetheine adenylyltransferase (171 aa).

Thr-9 serves as a coordination point for substrate. Residues 9–10 (TF) and His-17 contribute to the ATP site. Residues Lys-41, Leu-73, and Arg-87 each coordinate substrate. Residues 88-90 (GLR), Glu-98, and 123-129 (YQFISGT) each bind ATP.

It belongs to the bacterial CoaD family. In terms of assembly, homohexamer. Requires Mg(2+) as cofactor.

The protein localises to the cytoplasm. The catalysed reaction is (R)-4'-phosphopantetheine + ATP + H(+) = 3'-dephospho-CoA + diphosphate. It functions in the pathway cofactor biosynthesis; coenzyme A biosynthesis; CoA from (R)-pantothenate: step 4/5. Its function is as follows. Reversibly transfers an adenylyl group from ATP to 4'-phosphopantetheine, yielding dephospho-CoA (dPCoA) and pyrophosphate. The protein is Phosphopantetheine adenylyltransferase of Paraburkholderia xenovorans (strain LB400).